Reading from the N-terminus, the 82-residue chain is Protein transport protein SBH1 (82 aa).

Residues 1–36 (MSSPTPPGGQRTLQKRKQGSSQKVAASAPKKNTNSN) form a disordered region. At 1 to 53 (MSSPTPPGGQRTLQKRKQGSSQKVAASAPKKNTNSNNSILKIYSDEATGLRVD) the chain is on the cytoplasmic side. A compositionally biased stretch (polar residues) spans 19–36 (GSSQKVAASAPKKNTNSN). A helical transmembrane segment spans residues 54 to 74 (PLVVLFLAVGFIFSVVALHVI).

This sequence belongs to the SEC61-beta family. Component of the heterotrimeric Sec61 complex, which is composed of SSH1, SBH1 and SSS1. Presumably three to four Sec61 heterotrimers assemble into an oligomeric ring with a central aqueous pore. In cotranslational ER import, the pore diameter varies from 9-15 A in a ribosome-free resting state to 40-60 A in a functional state when associated with the ribosome. The Sec61 complex is part of a channel-forming translocon complex whose composition seem to change dependent upon different functional states. During post-translational ER import the Sec61 complex associates with the Sec62/63 complex to form the Sec complex. SBH1 interacts OST2, OST4 and WBP1 components of the OT complex.

Its subcellular location is the endoplasmic reticulum membrane. Part of the Sec61 complex, which is the major component of a channel-forming translocon complex that mediates protein translocation across the endoplasmic reticulum (ER). The functional states of the translocon complex include co- and post-translational ER import, cotranslational membrane protein integration and retrograde transport of misfolded proteins out of the ER. In the cotranslational pathway, ribosomes synthesizing presecretory proteins are targeted to the translocon by the cytosolic signal recognition particle (SRP) and its ER-localized receptor. The association of the Sec61 complex with the ribosome is mediated by the 28S rRNA of the large ribosomal subunit. SRP-independent post-translational translocation requires the association of additional factors, such as the Sec62/63 complex and KAR2. The sequence is that of Protein transport protein SBH1 (SBH1) from Saccharomyces cerevisiae (strain ATCC 204508 / S288c) (Baker's yeast).